A 787-amino-acid chain; its full sequence is Protein translocase subunit SecA (787 aa).

ATP-binding positions include Gln85, Gly103–Thr107, and Asp492.

It belongs to the SecA family. As to quaternary structure, monomer and homodimer. Part of the essential Sec protein translocation apparatus which comprises SecA, SecYEG and auxiliary proteins SecDF. Other proteins may also be involved.

It is found in the cell membrane. Its subcellular location is the cytoplasm. It catalyses the reaction ATP + H2O + cellular proteinSide 1 = ADP + phosphate + cellular proteinSide 2.. Part of the Sec protein translocase complex. Interacts with the SecYEG preprotein conducting channel. Has a central role in coupling the hydrolysis of ATP to the transfer of proteins into and across the cell membrane, serving as an ATP-driven molecular motor driving the stepwise translocation of polypeptide chains across the membrane. The sequence is that of Protein translocase subunit SecA from Limosilactobacillus reuteri (strain DSM 20016) (Lactobacillus reuteri).